A 129-amino-acid polypeptide reads, in one-letter code: C-phycocyanin beta subunit (129 aa).

Asparagine 62 carries the N4-methylasparagine modification. Cysteine 116 contributes to the (2R,3E)-phycocyanobilin binding site.

It belongs to the phycobiliprotein family. As to quaternary structure, heterodimer of an alpha and a beta subunit, which further assembles into trimers and the trimers into hexamers. Two isomers exist. Post-translationally, contains two covalently linked bilin chromophores.

It localises to the cellular thylakoid membrane. Functionally, light-harvesting photosynthetic bile pigment-protein from the phycobiliprotein complex (phycobilisome, PBS). Phycocyanin is the major phycobiliprotein in the PBS rod. This Aphanizomenon flos-aquae protein is C-phycocyanin beta subunit.